Here is a 244-residue protein sequence, read N- to C-terminus: Sortase B (244 aa).

Over 1–6 the chain is Cytoplasmic; it reads MRMKRF. The helical transmembrane segment at 7–24 threads the bilayer; that stretch reads LTIVQILLVVIIIIFGYK. Topologically, residues 25-244 are extracellular; sequence IVQTYIEDKQ…VVVAKIIKVS (220 aa). Catalysis depends on C223, which acts as the Acyl-thioester intermediate.

The protein belongs to the bacterial sortase family. Class B subfamily.

The protein resides in the cell membrane. The catalysed reaction is The enzyme catalyzes a cell wall sorting reaction in which a surface protein with a sorting signal containing a NPXTN motif is cleaved between the Thr and Asn residue. The resulting threonine carboxyl end of the protein is covalently attached to a pentaglycine cross-bridge of peptidoglycan.. With respect to regulation, inhibited by MTSET (2-(Trimethylammonium)-ethyl-methanethiosulfonate) and E64 ([n- (l-3-trans-carboxyoxirane-2-carbonyl)-l-leucyl]-amido(4-guanido)butane). Inhibited by coptisine. Functionally, transpeptidase that anchors surface proteins to the cell wall. Recognizes and modifies its substrate by proteolytic cleavage of a C-terminal sorting signal. Following cleavage, a covalent intermediate is formed via a thioester bond between the sortase and its substrate, which is then transferred and covalently attached to the cell wall. This sortase recognizes an Asn-Pro-Gln-Thr-Asn (NPQTN) motif in IsdC, which is cleaved by the sortase between the threonine and aspargine residues; may only have 1 substrate in this bacterium. May be dedicated to the process of iron acquisition during bacterial infection. This chain is Sortase B, found in Staphylococcus aureus (strain NCTC 8325 / PS 47).